Consider the following 360-residue polypeptide: Homoserine O-acetyltransferase (360 aa).

The 304-residue stretch at 41-344 folds into the AB hydrolase-1 domain; the sequence is NAILICHALT…DYGHDAFLVD (304 aa). The Nucleophile role is filled by Ser-144. Arg-213 provides a ligand contact to substrate. Residues Asp-305 and His-338 contribute to the active site. Asp-339 provides a ligand contact to substrate.

The protein belongs to the AB hydrolase superfamily. MetX family. As to quaternary structure, homodimer.

It is found in the cytoplasm. It carries out the reaction L-homoserine + acetyl-CoA = O-acetyl-L-homoserine + CoA. The protein operates within amino-acid biosynthesis; L-methionine biosynthesis via de novo pathway; O-acetyl-L-homoserine from L-homoserine: step 1/1. In terms of biological role, transfers an acetyl group from acetyl-CoA to L-homoserine, forming acetyl-L-homoserine. This chain is Homoserine O-acetyltransferase, found in Pasteurella multocida (strain Pm70).